The following is a 635-amino-acid chain: MIKITLKDGKVMEFEEGIKISDIAMKISPALYKKALAAKIDGETVDLMTELHKDSSLEILTFEDEMGKWALRHTGAHILAQAVKRLYPEVKLAIGPAIDTGFYYDFEADFTFTPEMLEKIEAEIKKIIKENHKLERFELPREEAINLMKEKNEDYKVELIEDLPEGEVISFYKQGDFTDLCAGPHVPSTGKVKSVKLLSLAGAYWRGDENNKMLQRIYGTAFTKKSELDEYLNMLEEAKKRDHRKLGKELDLFSIHEEGPGFPFFHPKGMIIRNILENFWREEHTKAGYQEIRTPLILNEALWHQSGHWDHYKENMYFTNIDDGDYAIKPMNCPGGILVYKNSMHSYRDLPLRLSELGIVHRHELSGALHGLMRVRCFTQDDAHLYMTKEQIKEEIVGIIKLIDKFYKLFGFEYFVELSTRPEDSMGSDEDWEIATNGLREALDSIGKEYRVNEGDGAFYGPKIDFHLKDCIGRTWQCGTIQLDFQMPERFDLSYIGADGEKHRPVMVHRTIYGSVERFIGILIEQYAGAFPTWLAPVQVKLMNITDAQYDYLKKVEEALKENNIRVEIDTRNEKIGYKIREAQLQKVPYMLILGDKEVEAGKVAVRSRKDGDLGAISLEEFIEKIKNEIKVKTN.

Positions 1 to 61 constitute a TGS domain; it reads MIKITLKDGK…HKDSSLEILT (61 aa). The tract at residues 242 to 532 is catalytic; the sequence is DHRKLGKELD…LIEQYAGAFP (291 aa). Positions 333, 384, and 509 each coordinate Zn(2+).

It belongs to the class-II aminoacyl-tRNA synthetase family. Homodimer. The cofactor is Zn(2+).

It localises to the cytoplasm. The enzyme catalyses tRNA(Thr) + L-threonine + ATP = L-threonyl-tRNA(Thr) + AMP + diphosphate + H(+). Functionally, catalyzes the attachment of threonine to tRNA(Thr) in a two-step reaction: L-threonine is first activated by ATP to form Thr-AMP and then transferred to the acceptor end of tRNA(Thr). Also edits incorrectly charged L-seryl-tRNA(Thr). The polypeptide is Threonine--tRNA ligase (Clostridium botulinum (strain 657 / Type Ba4)).